The following is a 911-amino-acid chain: Chitin synthase G (911 aa).

Disordered regions lie at residues 1–66 (MAYQ…VSGY) and 107–138 (GRVA…GGLR). Basic and acidic residues predominate over residues 12–34 (PHYDDNGHRLQDLPHGSYEEEAS). A compositionally biased stretch (polar residues) spans 54-66 (QHGSSTTRPVSGY). 6 helical membrane passes run 579–599 (IFST…TTVI), 624–644 (IINT…FILA), 659–679 (SFVV…YLVV), 711–731 (IIII…FMYL), 840–860 (LVTF…SDGV), and 879–899 (ALLW…CWFL).

The protein belongs to the chitin synthase family. Class III subfamily.

The protein localises to the cell membrane. It carries out the reaction [(1-&gt;4)-N-acetyl-beta-D-glucosaminyl](n) + UDP-N-acetyl-alpha-D-glucosamine = [(1-&gt;4)-N-acetyl-beta-D-glucosaminyl](n+1) + UDP + H(+). Its function is as follows. Polymerizes chitin, a structural polymer of the cell wall and septum, by transferring the sugar moiety of UDP-GlcNAc to the non-reducing end of the growing chitin polymer. In Aspergillus fumigatus (strain ATCC MYA-4609 / CBS 101355 / FGSC A1100 / Af293) (Neosartorya fumigata), this protein is Chitin synthase G (chsG).